Consider the following 464-residue polypeptide: E3 ubiquitin-protein ligase TRAIP (464 aa).

Residues 7–50 (CTICSDFFDNARDVAAITCGHTFHQECLLQWFHSAPHRTCPQCR) form an RING-type; atypical zinc finger. Coiled-coil stretches lie at residues 142–186 (LDKQ…MIRD) and 236–277 (AQKA…LQKT). The interval 439–464 (KRKKVSRPTACTSSLANQPRLEDFLK) is disordered. The PIP-box signature appears at 456–464 (QPRLEDFLK).

This sequence belongs to the TRAIP family.

Its subcellular location is the nucleus. It is found in the nucleoplasm. The protein resides in the nucleolus. It localises to the chromosome. The protein localises to the cytoplasm. The catalysed reaction is S-ubiquitinyl-[E2 ubiquitin-conjugating enzyme]-L-cysteine + [acceptor protein]-L-lysine = [E2 ubiquitin-conjugating enzyme]-L-cysteine + N(6)-ubiquitinyl-[acceptor protein]-L-lysine.. It functions in the pathway protein modification; protein ubiquitination. E3 ubiquitin ligase required to protect genome stability in response to replication stress. Acts as a key regulator of interstrand cross-link repair, which takes place when both strands of duplex DNA are covalently tethered together, thereby blocking replication and transcription. Controls the choice between the two pathways of replication-coupled interstrand-cross-link repair by mediating ubiquitination of mcm7 subunit of the CMG helicase complex. Short ubiquitin chains on mcm7 promote recruitment of DNA glycosylase neil3. If the interstrand cross-link cannot be cleaved by neil3, the ubiquitin chains continue to grow on mcm7, promoting the unloading of the CMG helicase complex by the vcp/p97 ATPase, enabling the Fanconi anemia DNA repair pathway. Only catalyzes ubiquitination of mcm7 when forks converge. Also involved in the repair of covalent DNA-protein cross-links (DPCs) during DNA synthesis: promotes ubiquitination of DPCs, leading to their degradation by the proteasome. Also acts as a negative regulator of innate immune signaling by inhibiting activation of NF-kappa-B mediated by TNF. In Xenopus laevis (African clawed frog), this protein is E3 ubiquitin-protein ligase TRAIP.